Consider the following 568-residue polypeptide: DEAD-box ATP-dependent RNA helicase 51 (568 aa).

Basic and acidic residues-rich tracts occupy residues 1 to 13 and 23 to 47; these read MVESDKSSVEELK and KKNEQQKAEEKTHTVEENADETQKK. The tract at residues 1–70 is disordered; that stretch reads MVESDKSSVE…EEEEKVEAME (70 aa). Residues 13–78 are a coiled coil; that stretch reads KKRVRKRSRG…MEDGEDEKNI (66 aa). A compositionally biased stretch (acidic residues) spans 60–70; the sequence is EEEEEKVEAME. The Q motif signature appears at 89–117; the sequence is VTFDSLDLSEQTSIAIKEMGFQYMTQIQA. A Helicase ATP-binding domain is found at 120–295; that stretch reads IQPLLEGKDV…RVSLTSPVHV (176 aa). Position 133 to 140 (133 to 140) interacts with ATP; the sequence is ARTGSGKT. A DEAD box motif is present at residues 243 to 246; it reads DEAD. One can recognise a Helicase C-terminal domain in the interval 321–468; the sequence is RLILLISFLK…ELEFNEKRLS (148 aa). The tract at residues 540–568 is disordered; that stretch reads KVRKARKQQGRNGFSPYSPYGKSTPTKEA.

It belongs to the DEAD box helicase family. DDX18/HAS1 subfamily.

It catalyses the reaction ATP + H2O = ADP + phosphate + H(+). The chain is DEAD-box ATP-dependent RNA helicase 51 (RH51) from Arabidopsis thaliana (Mouse-ear cress).